Reading from the N-terminus, the 118-residue chain is Cycloviolacin-O11 (118 aa).

A signal peptide spans Met-1 to Ala-22. Residues Thr-23–Gly-84 constitute a propeptide that is removed on maturation. A cross-link (cyclopeptide (Gly-Asn)) is located at residues Gly-85–Asn-115. 3 disulfide bridges follow: Cys-89–Cys-105, Cys-93–Cys-107, and Cys-98–Cys-112. Residues Ser-116–Ala-118 constitute a propeptide that is removed on maturation.

Post-translationally, cycloviolacin-O11 is a cyclic peptide. As to expression, expressed in leaves, petals and petioles but not in roots and runners (at protein level).

Probably participates in a plant defense mechanism. In Viola odorata (Sweet violet), this protein is Cycloviolacin-O11 (Voc2).